We begin with the raw amino-acid sequence, 718 residues long: Quinolinate synthase, chloroplastic (718 aa).

Positions 1-22 are enriched in low complexity; that stretch reads MALALSVAPTSSSLSSLLSRTP. A disordered region spans residues 1–29; that stretch reads MALALSVAPTSSSLSSLLSRTPNPSPNFR. A chloroplast-targeting transit peptide spans 1–70; that stretch reads MALALSVAPT…VNASPFSISA (70 aa). The active-site Cysteine persulfide intermediate is the Cys-132. His-280 and Ser-306 together coordinate iminosuccinate. A [4Fe-4S] cluster-binding site is contributed by Cys-360. Iminosuccinate contacts are provided by residues 389–391 and Ser-411; that span reads YIN. [4Fe-4S] cluster is bound at residue Cys-484. Iminosuccinate is bound by residues 510–512 and Thr-535; that span reads HLE. Cys-640 serves as a coordination point for [4Fe-4S] cluster.

Belongs to the quinolinate synthase family. Type 1 subfamily. As to quaternary structure, homodimer. Interacts in vitro with NFS2, CpNIFS3 and AO. Part of a Cys defulfurase complex. The cofactor is [4Fe-4S] cluster. In terms of tissue distribution, expressed in roots, leaves, stems and flowers.

Its subcellular location is the plastid. It localises to the chloroplast. It carries out the reaction iminosuccinate + dihydroxyacetone phosphate = quinolinate + phosphate + 2 H2O + H(+). Its pathway is cofactor biosynthesis; NAD(+) biosynthesis; quinolinate from iminoaspartate: step 1/1. Catalyzes the condensation of iminoaspartate with dihydroxyacetone phosphate to form quinolinate. Can complement nadA-deficient E.coli mutant. Essential for the de novo synthesis of NAD. Also participates in cysteine desulfurization mediated by NFS2. Can activate the cysteine desulfurase activity of NFS2 in vitro. This chain is Quinolinate synthase, chloroplastic, found in Arabidopsis thaliana (Mouse-ear cress).